The following is a 146-amino-acid chain: Ribonuclease P protein component (146 aa).

It belongs to the RnpA family. In terms of assembly, consists of a catalytic RNA component (M1 or rnpB) and a protein subunit.

The catalysed reaction is Endonucleolytic cleavage of RNA, removing 5'-extranucleotides from tRNA precursor.. RNaseP catalyzes the removal of the 5'-leader sequence from pre-tRNA to produce the mature 5'-terminus. It can also cleave other RNA substrates such as 4.5S RNA. The protein component plays an auxiliary but essential role in vivo by binding to the 5'-leader sequence and broadening the substrate specificity of the ribozyme. This chain is Ribonuclease P protein component, found in Helicobacter hepaticus (strain ATCC 51449 / 3B1).